Consider the following 162-residue polypeptide: Transcription elongation factor GreA (162 aa).

Residues 50–75 (YHAAREEQGHLESRIRQLQELLRTAK) adopt a coiled-coil conformation.

Belongs to the GreA/GreB family.

Its function is as follows. Necessary for efficient RNA polymerase transcription elongation past template-encoded arresting sites. The arresting sites in DNA have the property of trapping a certain fraction of elongating RNA polymerases that pass through, resulting in locked ternary complexes. Cleavage of the nascent transcript by cleavage factors such as GreA or GreB allows the resumption of elongation from the new 3'terminus. GreA releases sequences of 2 to 3 nucleotides. The sequence is that of Transcription elongation factor GreA from Saccharopolyspora erythraea (strain ATCC 11635 / DSM 40517 / JCM 4748 / NBRC 13426 / NCIMB 8594 / NRRL 2338).